Reading from the N-terminus, the 318-residue chain is Malate dehydrogenase (318 aa).

NAD(+) is bound by residues G10–G15 and D34. Substrate is bound by residues R83 and R89. Residues N96 and I119 to N121 contribute to the NAD(+) site. Substrate is bound by residues N121 and R152. The active-site Proton acceptor is H176.

This sequence belongs to the LDH/MDH superfamily. MDH type 3 family.

The catalysed reaction is (S)-malate + NAD(+) = oxaloacetate + NADH + H(+). Catalyzes the reversible oxidation of malate to oxaloacetate. The chain is Malate dehydrogenase from Rhodospirillum rubrum (strain ATCC 11170 / ATH 1.1.1 / DSM 467 / LMG 4362 / NCIMB 8255 / S1).